We begin with the raw amino-acid sequence, 450 residues long: tRNA (guanine-N(7)-)-methyltransferase non-catalytic subunit TRM82 (450 aa).

Basic and acidic residues predominate over residues 69–82; that stretch reads AAKKLKTNEGEAIE. The tract at residues 69–103 is disordered; the sequence is AAKKLKTNEGEAIERPGNQRRVPLPGKDPKVPVPG. WD repeat units lie at residues 108 to 147, 200 to 241, and 245 to 285; these read PVYQYIRCLQLSHDEKMLVACTDSDKAAVFFRIELHKDNC, GHVS…VIDK, and GHKE…LMSS.

Belongs to the WD repeat TRM82 family. Forms a heterodimer with the catalytic subunit TRM8.

Its subcellular location is the nucleus. Its pathway is tRNA modification; N(7)-methylguanine-tRNA biosynthesis. Functionally, required for the formation of N(7)-methylguanine at position 46 (m7G46) in tRNA. In the complex, it is required to stabilize and induce conformational changes of the catalytic subunit. The polypeptide is tRNA (guanine-N(7)-)-methyltransferase non-catalytic subunit TRM82 (Eremothecium gossypii (strain ATCC 10895 / CBS 109.51 / FGSC 9923 / NRRL Y-1056) (Yeast)).